Here is a 184-residue protein sequence, read N- to C-terminus: Ras-related protein RabN2 (184 aa).

3–10 (GDYRSGKT) contacts GTP. Residues 25-32 (TNPSTFDY) carry the Effector region motif. GTP is bound by residues 50-54 (DTAGH) and 117-120 (TKSD).

This sequence belongs to the small GTPase superfamily. Rab family.

In Dictyostelium discoideum (Social amoeba), this protein is Ras-related protein RabN2 (rabN2).